The primary structure comprises 122 residues: 5'-AMP-activated protein kinase subunit beta-1 (122 aa).

Phosphoserine occurs at positions 5, 61, 66, and 73. The tract at residues glutamate 33 to lysine 122 is glycogen-binding domain. Threonine 113 carries the post-translational modification Phosphothreonine.

Belongs to the 5'-AMP-activated protein kinase beta subunit family. AMPK is a heterotrimer of an alpha catalytic subunit (PRKAA1 or PRKAA2), a beta (PRKAB1 or PRKAB2) and a gamma non-catalytic subunits (PRKAG1, PRKAG2 or PRKAG3). Interacts with FNIP1 and FNIP2. In terms of processing, phosphorylated when associated with the catalytic subunit (PRKAA1 or PRKAA2). Phosphorylated by ULK1; leading to negatively regulate AMPK activity and suggesting the existence of a regulatory feedback loop between ULK1 and AMPK.

Functionally, non-catalytic subunit of AMP-activated protein kinase (AMPK), an energy sensor protein kinase that plays a key role in regulating cellular energy metabolism. In response to reduction of intracellular ATP levels, AMPK activates energy-producing pathways and inhibits energy-consuming processes: inhibits protein, carbohydrate and lipid biosynthesis, as well as cell growth and proliferation. AMPK acts via direct phosphorylation of metabolic enzymes, and by longer-term effects via phosphorylation of transcription regulators. Also acts as a regulator of cellular polarity by remodeling the actin cytoskeleton; probably by indirectly activating myosin. Beta non-catalytic subunit acts as a scaffold on which the AMPK complex assembles, via its C-terminus that bridges alpha (PRKAA1 or PRKAA2) and gamma subunits (PRKAG1, PRKAG2 or PRKAG3). This Sus scrofa (Pig) protein is 5'-AMP-activated protein kinase subunit beta-1 (PRKAB1).